The sequence spans 66 residues: Large ribosomal subunit protein uL29 (66 aa).

The protein belongs to the universal ribosomal protein uL29 family.

The chain is Large ribosomal subunit protein uL29 from Ruegeria sp. (strain TM1040) (Silicibacter sp.).